The chain runs to 890 residues: Serine/threonine-protein kinase greatwall (890 aa).

The 814-residue stretch at 33–846 (FSIVKPISRG…LKDLKAHHLF (814 aa)) folds into the Protein kinase domain. Residues 39 to 47 (ISRGAFGKV) and lysine 62 each bind ATP. The active-site Proton acceptor is aspartate 156. Disordered stretches follow at residues 324–353 (AEAPPYLNSSRVKDCSSEQARSKKPMGSSA), 412–434 (HKDLGKDDQGELEKLTISPDSPP), 517–541 (NYASDRKSEDDYISAPRTHENLGSG), 559–592 (DGEANSNSGCEEGENQKESLNQDSESSSADMSVT), and 609–628 (ELSFEESPSESNEETTPENK). Over residues 412–425 (HKDLGKDDQGELEK) the composition is skewed to basic and acidic residues. Residues 576 to 592 (ESLNQDSESSSADMSVT) are compositionally biased toward polar residues. Acidic residues predominate over residues 615–624 (SPSESNEETT). Threonine 752 is subject to Phosphothreonine; by CDK1. The AGC-kinase C-terminal domain maps to 847–890 (HAIEWDDLQNLPMPFIPQPDDETDTTYFEARNNAQHLKVSGFSL).

Belongs to the protein kinase superfamily. AGC Ser/Thr protein kinase family. Post-translationally, phosphorylation at Thr-752 by CDK1 during M phase activates its kinase activity. Maximum phosphorylation occurs in prometaphase.

It localises to the cytoplasm. It is found in the cytoskeleton. The protein localises to the microtubule organizing center. Its subcellular location is the centrosome. The protein resides in the nucleus. It carries out the reaction L-seryl-[protein] + ATP = O-phospho-L-seryl-[protein] + ADP + H(+). The enzyme catalyses L-threonyl-[protein] + ATP = O-phospho-L-threonyl-[protein] + ADP + H(+). Functionally, serine/threonine kinase that plays a key role in M phase by acting as a regulator of mitosis entry and maintenance. Acts by promoting the inactivation of protein phosphatase 2A (PP2A) during M phase: does not directly inhibit PP2A but acts by mediating phosphorylation and subsequent activation of arpp19 and ensa at 'Ser-67', 2 phosphatase inhibitors that specifically inhibit the ppp2r2d (PR55-delta) subunit of PP2A. Inactivation of PP2A during M phase is essential to keep cyclin-B1-CDK1 activity high. Following DNA damage, it is also involved in checkpoint recovery by being inhibited. The polypeptide is Serine/threonine-protein kinase greatwall (mastl) (Xenopus tropicalis (Western clawed frog)).